The primary structure comprises 126 residues: Large ribosomal subunit protein mL52 (126 aa).

Residues 1–28 constitute a mitochondrion transit peptide; the sequence is MLKITKICLASSATSTAQRSIALTAPRA.

The protein belongs to the mitochondrion-specific ribosomal protein mL52 family. In terms of assembly, component of the mitochondrial ribosome large subunit (39S) which comprises a 16S rRNA and about 50 distinct proteins.

Its subcellular location is the mitochondrion. The chain is Large ribosomal subunit protein mL52 (mRpL52) from Drosophila melanogaster (Fruit fly).